A 230-amino-acid chain; its full sequence is Sugar fermentation stimulation protein homolog (230 aa).

The protein belongs to the SfsA family.

The sequence is that of Sugar fermentation stimulation protein homolog from Pyrococcus furiosus (strain ATCC 43587 / DSM 3638 / JCM 8422 / Vc1).